Consider the following 389-residue polypeptide: Ethanolamine-phosphate cytidylyltransferase (389 aa).

The disordered stretch occupies residues 1–20 (MIRNGRGAAGGAEQPGPGGR). CTP-binding positions include 221–222 (AF), 229–232 (HVDF), K259, 307–310 (HGKT), and 336–340 (SGSNL). S338 bears the Phosphoserine mark. Phosphothreonine is present on residues T341 and T342.

Belongs to the cytidylyltransferase family. In terms of tissue distribution, strongest expression in liver, heart, and skeletal muscle.

The enzyme catalyses phosphoethanolamine + CTP + H(+) = CDP-ethanolamine + diphosphate. Its pathway is phospholipid metabolism; phosphatidylethanolamine biosynthesis; phosphatidylethanolamine from ethanolamine: step 2/3. Functionally, ethanolamine-phosphate cytidylyltransferase that catalyzes the second step in the synthesis of phosphatidylethanolamine (PE) from ethanolamine via the CDP-ethanolamine pathway. Phosphatidylethanolamine is a dominant inner-leaflet phospholipid in cell membranes, where it plays a role in membrane function by structurally stabilizing membrane-anchored proteins, and participates in important cellular processes such as cell division, cell fusion, blood coagulation, and apoptosis. In Homo sapiens (Human), this protein is Ethanolamine-phosphate cytidylyltransferase (PCYT2).